Consider the following 243-residue polypeptide: Carboxy-S-adenosyl-L-methionine synthase (243 aa).

S-adenosyl-L-methionine is bound by residues Tyr39, Gly64–Ser66, Asp90–Asn91, Asp118–Leu119, Asn133, and Arg200.

Belongs to the class I-like SAM-binding methyltransferase superfamily. Cx-SAM synthase family. In terms of assembly, homodimer.

It catalyses the reaction prephenate + S-adenosyl-L-methionine = carboxy-S-adenosyl-L-methionine + 3-phenylpyruvate + H2O. Catalyzes the conversion of S-adenosyl-L-methionine (SAM) to carboxy-S-adenosyl-L-methionine (Cx-SAM). This chain is Carboxy-S-adenosyl-L-methionine synthase, found in Idiomarina loihiensis (strain ATCC BAA-735 / DSM 15497 / L2-TR).